The chain runs to 307 residues: Serine/threonine-protein phosphatase 4 catalytic subunit (307 aa).

An N-acetylalanine modification is found at Ala-2. Residues Asp-54, His-56, Asp-82, and Asn-114 each coordinate Mn(2+). Catalysis depends on His-115, which acts as the Proton donor. Mn(2+) contacts are provided by His-164 and His-238. Position 307 is a leucine methyl ester (Leu-307).

Belongs to the PPP phosphatase family. PP-4 (PP-X) subfamily. In terms of assembly, serine/threonine-protein phosphatase 4 (PP4) occurs in different assemblies of the catalytic and one or more regulatory subunits. Component of the PP4 complexes PPP4C-PPP4R1, PPP4C-PPP4R2, PPP4C-PPP4R2-PPP4R3A, PPP4C-PPP4R2-PPP4R3B and PPP4C-PPP4R4. The PPP4C-PPP4R2 complex appears to be a tetramer composed of 2 molecules of PPP4C and 2 molecules of PPP4R2. Interacts with REL, NFKB1/p50 and RELA. Interacts with SMN1 and GEMIN4. Interacts with IRS4 (phosphorylated). Interacts with SMEK1/PPP4R3A; the interaction requires PP4R2. Interacts with HDAC3. Requires Mn(2+) as cofactor. In terms of processing, methylation at the C-terminal Leu-307 is critical for interactions with regulatory subunits and functions in DNA repair.

The protein localises to the cytoplasm. It localises to the nucleus. Its subcellular location is the cytoskeleton. The protein resides in the microtubule organizing center. It is found in the centrosome. The catalysed reaction is O-phospho-L-seryl-[protein] + H2O = L-seryl-[protein] + phosphate. It catalyses the reaction O-phospho-L-threonyl-[protein] + H2O = L-threonyl-[protein] + phosphate. Its function is as follows. Protein phosphatase that is involved in many processes such as microtubule organization at centrosomes, maturation of spliceosomal snRNPs, apoptosis, DNA repair, tumor necrosis factor (TNF)-alpha signaling, activation of c-Jun N-terminal kinase MAPK8, regulation of histone acetylation, DNA damage checkpoint signaling, NF-kappa-B activation and cell migration. The PPP4C-PPP4R1 PP4 complex may play a role in dephosphorylation and regulation of HDAC3. The PPP4C-PPP4R2-PPP4R3A PP4 complex specifically dephosphorylates H2AX phosphorylated on Ser-140 (gamma-H2AX) generated during DNA replication and required for DNA DSB repair. Dephosphorylates NDEL1 at CDK1 phosphorylation sites and negatively regulates CDK1 activity in interphase. In response to DNA damage, catalyzes RPA2 dephosphorylation, an essential step for DNA repair since it allows the efficient RPA2-mediated recruitment of RAD51 to chromatin. The chain is Serine/threonine-protein phosphatase 4 catalytic subunit (PPP4C) from Oryctolagus cuniculus (Rabbit).